The following is a 926-amino-acid chain: MAASVDRQYHPAPMSGVVRTPFSNHHRSDSPVRNGYTFSNPPSSNGVVKPGEKIKLVDNNSNSNNGSNNNNNRYDSDSEEDDDENEMNVWNEMIKKGNSELEPSSVDSRDEGTADQWIERNPSMIRLTGKHPFNSEPPLTRLMHHGFLTPVPLHYVRNHGPVPNAKWEDWTVEVTGLVKRPIRFTMDQLVNDFQSREFPVTLVCAGNRRKEQNMTKQSIGFNWGSAAVSTSVWRGVPLRDVLKRCGVMSSLKGALNVCFEGAEDLPGGGGSKYGTSVKREFAMDPARDIILAYMQNGEKLSPDHGYPVRMIIPGFIGGRMVKWLKRIIVTTTESDNYYHYKDNRVLPSHVDAELANSEAWWYKQEYIINELNVNSVITSPCHEEILPINAWTTQRPYTMRGYAYSGGGRKVTRVEVTMDGGDTWDICELDHQERGSKYGKFWCWCFWSLEVEVLDLLGAKEIGVRAWDESLNTQPEKLIWNVMGMMNNCWFRVKTNVCKPHKGEIGIVFEHPTQPGNKSGGWMARERHLEISDSGPTLKRTASTPFMNTTSKMYSMSEVKKHNTADSAWIVVHGNVYNATRFLKDHPGGSDSILINAGTDCTEEFDAIHSDKAKRLLEDFRIGELISTGYTSDSSSPGNSVHGGSVYSGLAGLAPITEAVPLRNVALNPRVKIPCKLIEKVSLSHDVRRFRFGLPSEDQVLGLPVGKHIFLCANVDDKLCMRAYTPSSTIDVVGYFDLVVKVYFKDVHPRFPNGGVMSQHLDSLSLGSIVDVKGPLGHIEYLGKGNFTVHGKPKFAKKLAMISGGTGITPIYQVMQAILKDPEDKTEMHVVYANRTEEDILLREELDKWADEFRDRVKVWYVVEKAEEGWKYDTGFISEKILRDHVPAVGDDVLALTCGPPPMIQFAVQPNLDKMGFDIKEQLLIF.

The interval 1-85 is disordered; the sequence is MAASVDRQYH…SDSEEDDDEN (85 aa). The segment covering 36–46 has biased composition (polar residues); the sequence is YTFSNPPSSNG. Residues 58 to 73 show a composition bias toward low complexity; sequence DNNSNSNNGSNNNNNR. A Mo-molybdopterin-binding site is contributed by Cys-204. A Cytochrome b5 heme-binding domain is found at 551-626; the sequence is SKMYSMSEVK…LEDFRIGELI (76 aa). Heme contacts are provided by His-586 and His-609. The FAD-binding FR-type domain maps to 670-782; it reads RVKIPCKLIE…KGPLGHIEYL (113 aa). Residues 722–725, 739–743, Phe-744, Phe-751, 756–758, and Thr-809 each bind FAD; these read RAYT, VVKVY, and VMS.

This sequence belongs to the nitrate reductase family. Homodimer. It depends on FAD as a cofactor. Heme serves as cofactor. The cofactor is Mo-molybdopterin.

It catalyses the reaction nitrite + NAD(+) + H2O = nitrate + NADH + H(+). Its function is as follows. Nitrate reductase is a key enzyme involved in the first step of nitrate assimilation in plants, fungi and bacteria. The sequence is that of Nitrate reductase [NADH] (NIA) from Spinacia oleracea (Spinach).